The sequence spans 332 residues: Glycerol-3-phosphate dehydrogenase [NAD(P)+] (332 aa).

Ser15, Trp16, and Lys110 together coordinate NADPH. Lys110, Gly137, and Ser139 together coordinate sn-glycerol 3-phosphate. Ala141 provides a ligand contact to NADPH. 5 residues coordinate sn-glycerol 3-phosphate: Lys192, Asp245, Ser255, Arg256, and Asn257. Lys192 acts as the Proton acceptor in catalysis. Arg256 serves as a coordination point for NADPH. NADPH is bound at residue Glu282.

The protein belongs to the NAD-dependent glycerol-3-phosphate dehydrogenase family.

The protein resides in the cytoplasm. It carries out the reaction sn-glycerol 3-phosphate + NAD(+) = dihydroxyacetone phosphate + NADH + H(+). The enzyme catalyses sn-glycerol 3-phosphate + NADP(+) = dihydroxyacetone phosphate + NADPH + H(+). Its pathway is membrane lipid metabolism; glycerophospholipid metabolism. Its function is as follows. Catalyzes the reduction of the glycolytic intermediate dihydroxyacetone phosphate (DHAP) to sn-glycerol 3-phosphate (G3P), the key precursor for phospholipid synthesis. In Coxiella burnetii (strain CbuG_Q212) (Coxiella burnetii (strain Q212)), this protein is Glycerol-3-phosphate dehydrogenase [NAD(P)+].